A 408-amino-acid chain; its full sequence is Protein CNPPD1 (408 aa).

Residues 233-253 form a helical membrane-spanning segment; the sequence is CLLAVAYVSSVALAVASMAVI.

It belongs to the CNPPD1 family.

It is found in the membrane. The chain is Protein CNPPD1 (Cnppd1) from Rattus norvegicus (Rat).